Reading from the N-terminus, the 439-residue chain is GTPase Der (439 aa).

2 consecutive EngA-type G domains span residues 4–166 (PIVA…PAQD) and 175–350 (IRIA…EEAS). Residues 10–17 (GRPNVGKS), 57–61 (DTGGL), 119–122 (NKVE), 181–188 (GRPNVGKS), 228–232 (DTAGM), and 293–296 (NKWD) each bind GTP. The region spanning 351 to 435 (KRVATADLNN…PIRFFLRKRE (85 aa)) is the KH-like domain.

The protein belongs to the TRAFAC class TrmE-Era-EngA-EngB-Septin-like GTPase superfamily. EngA (Der) GTPase family. Associates with the 50S ribosomal subunit.

GTPase that plays an essential role in the late steps of ribosome biogenesis. This Desulforamulus reducens (strain ATCC BAA-1160 / DSM 100696 / MI-1) (Desulfotomaculum reducens) protein is GTPase Der.